The primary structure comprises 780 residues: Carboxysome assembly protein CsoS2 (780 aa).

Residues 1-15 (MARLSSRELALERRK) show a composition bias toward basic and acidic residues. Disordered regions lie at residues 1–173 (MARL…RAIE), 189–212 (KHGK…NPDL), 226–281 (TKAG…NRSV), 330–349 (NRVT…DEPG), and 382–444 (SLTQ…TGVT). The stretch at 5 to 24 (SSRELALERRKALTTSGKKS) is one N-repeat 1 repeat. The span at 48 to 78 (AAAAVEPTAPAVSAPVKPTVSFTPASPSSSS) shows a compositional bias: low complexity. Residues 86-105 (PSRDLVLARRDALSRRGKTA) form an N-repeat 2 repeat. The span at 86–116 (PSRDLVLARRDALSRRGKTADTSRDRNRADV) shows a compositional bias: basic and acidic residues. The span at 117–130 (ARQTQAAAPVAASA) shows a compositional bias: low complexity. 2 N-repeat repeats span residues 175-194 (PSRA…GKTA) and 213-235 (TSRE…NKQS). M-repeat repeat units lie at residues 260-309 (KVGE…QTFC), 320-369 (KVRV…AAYC), 378-417 (KVGH…GDQY), 431-480 (KVGQ…NAFC), 490-535 (KVGF…LENA), and 541-599 (TSAV…ATAC). The segment at 260 to 608 (KVGESTTSTG…CGNEAPAGTD (349 aa)) is middle region. Residues 264-276 (STTSTGQTVTGTQ) show a composition bias toward low complexity. Composition is skewed to low complexity over residues 387–403 (GRPV…SVTG) and 432–444 (VGQS…TGVT). A C-terminal domain region spans residues 609 to 749 (SHGQAPEGAA…ATVPHERKRN (141 aa)). C-repeat repeat units lie at residues 623 to 669 (SVMS…TEQF) and 693 to 726 (EQPA…EGVS). Disordered stretches follow at residues 631-661 (AQQQ…LAGG) and 686-780 (AVVS…GARG). Polar residues predominate over residues 641–651 (VTGTSYEQGNR). Basic and acidic residues predominate over residues 709-720 (TGDDWDRGEHVT). A C-terminal peptide region spans residues 750–780 (EENEWPVSRVTGSSGNTEKGSLITVSGGARG). Residues 759–768 (VTGSSGNTEK) are compositionally biased toward polar residues.

Belongs to the CsoS2 family. As to quaternary structure, interacts via its N-terminal repeats with RuBisCO. Interacts with the major shell protein CsoS1. In terms of processing, unlike H.neapolitanus and predictions for P.marinus strain MIT 9313, this protein is not thought to have ribosomal frameshifting.

Required for alpha-carboxysome (Cb) assembly, mediates interaction between RuBisCO and the carboxysome shell. The protein is probably intrinsically disordered. The C-terminal repeats act as the encapsulation signal to target proteins to the Cb; they are necessary and sufficient to target both CsoS2 and foreign proteins to the Cb. The N-terminal repeats of this protein bind simultaneously to both subunits of RuBisCO. Probably also interacts with the major shell proteins (CsoS1); that interaction would increase the local concentration of CsoS2 so that it can condense RuBisCO and full carboxysomes can be formed. The polypeptide is Carboxysome assembly protein CsoS2 (Parasynechococcus marenigrum (strain WH8102)).